The sequence spans 269 residues: Type II methyltransferase M2.LlaDCHI (269 aa).

Belongs to the N(4)/N(6)-methyltransferase family.

The catalysed reaction is a 2'-deoxyadenosine in DNA + S-adenosyl-L-methionine = an N(6)-methyl-2'-deoxyadenosine in DNA + S-adenosyl-L-homocysteine + H(+). Its function is as follows. A beta subtype methylase, recognizes the double-stranded sequence 5'-GATC-3', methylates A-2 on both strands, and protects the DNA from cleavage by the LlaDCHI endonuclease. The protein is Type II methyltransferase M2.LlaDCHI of Lactococcus lactis subsp. cremoris (Streptococcus cremoris).